The chain runs to 397 residues: LIM/homeobox protein Lhx9 (397 aa).

LIM zinc-binding domains lie at 69 to 130 (ALCA…RFSV) and 131 to 193 (QRCA…LLQG). 3 disordered regions span residues 248–272 (ENEA…RMRT), 330–364 (ENGG…TLTD), and 378–397 (SNMD…TNLF). A DNA-binding region (homeobox) is located at residues 267 to 326 (TKRMRTSFKHHQLRTMKSYFAINHNPDAKDLKQLAQKTGLTKRVLQVWFQNARAKFRRNL). The span at 353–364 (LTPPGTATTLTD) shows a compositional bias: low complexity.

In terms of assembly, interacts with LDB1 and LDB2.

It localises to the nucleus. Functionally, involved in gonadal development. The polypeptide is LIM/homeobox protein Lhx9 (LHX9) (Homo sapiens (Human)).